A 98-amino-acid polypeptide reads, in one-letter code: NADH-ubiquinone oxidoreductase chain 4L (98 aa).

3 helical membrane passes run 1–21 (MSMV…GLLI), 30–50 (LLCL…TILT), and 61–81 (IILL…LVMI).

It belongs to the complex I subunit 4L family. In terms of assembly, core subunit of respiratory chain NADH dehydrogenase (Complex I) which is composed of 45 different subunits.

It is found in the mitochondrion inner membrane. It catalyses the reaction a ubiquinone + NADH + 5 H(+)(in) = a ubiquinol + NAD(+) + 4 H(+)(out). In terms of biological role, core subunit of the mitochondrial membrane respiratory chain NADH dehydrogenase (Complex I) which catalyzes electron transfer from NADH through the respiratory chain, using ubiquinone as an electron acceptor. Part of the enzyme membrane arm which is embedded in the lipid bilayer and involved in proton translocation. This Martes americana (American marten) protein is NADH-ubiquinone oxidoreductase chain 4L (MT-ND4L).